Reading from the N-terminus, the 100-residue chain is Enhancer of yellow 2 transcription factor (100 aa).

Belongs to the ENY2 family. In terms of assembly, component of the nuclear pore complex (NPC)-associated AMEX complex (anchoring and mRNA export complex), composed of at least e(y)2 and xmas-2. Component of the SAGA transcription coactivator-HAT complexes, at least composed of Ada2b, e(y)2, Pcaf/Gcn5, Taf10 and Nipped-A/Trrap. Within the SAGA complex, e(y)2, Sgf11, and not/nonstop form an additional subcomplex of SAGA called the DUB module (deubiquitination module). Component of the THO complex, composed of at least e(y)2, HPR1, THO2, THOC5, THOC6 and THOC7. Interacts with e(y)1. Interacts with su(Hw) (via zinc fingers). Interacts with xmas-2; required for localization to the nuclear periphery. Interacts with the nuclear pore complex (NPC).

Its subcellular location is the nucleus. The protein localises to the nucleoplasm. It is found in the cytoplasm. In terms of biological role, involved in mRNA export coupled transcription activation by association with both the AMEX and the SAGA complexes. The SAGA complex is a multiprotein complex that activates transcription by remodeling chromatin and mediating histone acetylation and deubiquitination. Within the SAGA complex, participates in a subcomplex that specifically deubiquitinates histone H2B. The SAGA complex is recruited to specific gene promoters by activators, where it is required for transcription. Required for nuclear receptor-mediated transactivation. Involved in transcription elongation by recruiting the THO complex onto nascent mRNA. The AMEX complex functions in docking export-competent ribonucleoprotein particles (mRNPs) to the nuclear entrance of the nuclear pore complex (nuclear basket). AMEX participates in mRNA export and accurate chromatin positioning in the nucleus by tethering genes to the nuclear periphery. The protein is Enhancer of yellow 2 transcription factor of Drosophila persimilis (Fruit fly).